A 2202-amino-acid chain; its full sequence is Nonribosomal peptide synthetase 5 (2202 aa).

Positions 58–443 are adenylation 1; that stretch reads TYAQLDALSD…LLSYDKVDSA (386 aa). Residues 517-593 enclose the Carrier 1 domain; sequence ERGLGAVESV…NIAAAVVELS (77 aa). Ser-554 carries the post-translational modification O-(pantetheine 4'-phosphoryl)serine. Positions 625–918 are condensation 1; the sequence is IAPMTDMQTR…INTLPLAINT (294 aa). The adenylation 2 stretch occupies residues 1105-1482; that stretch reads TYREFGRMTE…EVQSTISKLA (378 aa). In terms of domain architecture, Carrier 2 spans 1563-1643; sequence DLETDTQRVL…DLSLAIDELV (81 aa). The residue at position 1602 (Ser-1602) is an O-(pantetheine 4'-phosphoryl)serine. A condensation 2 region spans residues 1664–1952; that stretch reads GQLPLSYLEK…FLDRLLLRIQ (289 aa). Residues 2103–2129 form a disordered region; that stretch reads PVGLTPSHEGSAELTNGTNKTDSTTGQ. A compositionally biased stretch (polar residues) spans 2115–2129; the sequence is ELTNGTNKTDSTTGQ. The Carrier 3 domain occupies 2130-2202; that stretch reads QELENNLTDV…LELATCAVII (73 aa). An O-(pantetheine 4'-phosphoryl)serine modification is found at Ser-2164.

The protein belongs to the NRP synthetase family.

Functionally, nonribosomal peptide synthesis (NRPS) is a key mechanism responsible for the biosynthesis of bioactive metabolites which are potentially contributing to organismal virulence. The chain is Nonribosomal peptide synthetase 5 (NRPS5) from Aspergillus fumigatus (strain ATCC MYA-4609 / CBS 101355 / FGSC A1100 / Af293) (Neosartorya fumigata).